A 431-amino-acid polypeptide reads, in one-letter code: Glutamyl-tRNA(Gln) amidotransferase subunit A (431 aa).

Catalysis depends on charge relay system residues K55 and S130. S154 (acyl-ester intermediate) is an active-site residue.

It belongs to the amidase family. GatA subfamily. As to quaternary structure, heterotrimer of A, B and C subunits.

The catalysed reaction is L-glutamyl-tRNA(Gln) + L-glutamine + ATP + H2O = L-glutaminyl-tRNA(Gln) + L-glutamate + ADP + phosphate + H(+). Its function is as follows. Allows the formation of correctly charged Gln-tRNA(Gln) through the transamidation of misacylated Glu-tRNA(Gln) in organisms which lack glutaminyl-tRNA synthetase. The reaction takes place in the presence of glutamine and ATP through an activated gamma-phospho-Glu-tRNA(Gln). In Methanococcus maripaludis (strain C5 / ATCC BAA-1333), this protein is Glutamyl-tRNA(Gln) amidotransferase subunit A.